Here is a 1301-residue protein sequence, read N- to C-terminus: DNA-directed RNA polymerase subunit beta (1301 aa).

The protein belongs to the RNA polymerase beta chain family. In terms of assembly, in plastids the minimal PEP RNA polymerase catalytic core is composed of four subunits: alpha, beta, beta', and beta''. When a (nuclear-encoded) sigma factor is associated with the core the holoenzyme is formed, which can initiate transcription.

The protein resides in the plastid. The protein localises to the chloroplast. The catalysed reaction is RNA(n) + a ribonucleoside 5'-triphosphate = RNA(n+1) + diphosphate. DNA-dependent RNA polymerase catalyzes the transcription of DNA into RNA using the four ribonucleoside triphosphates as substrates. The chain is DNA-directed RNA polymerase subunit beta from Chlorella vulgaris (Green alga).